A 299-amino-acid chain; its full sequence is Protoheme IX farnesyltransferase (299 aa).

A run of 9 helical transmembrane segments spans residues 17-37 (VVAL…PAPY), 41-61 (GLLV…AAVF), 91-111 (ALMW…LFVN), 113-133 (ITMV…TLYL), 141-161 (IVIG…AVSG), 168-188 (ACLL…ALAI), 207-227 (GLAY…LVSL), 228-248 (LPYL…ALGI), and 266-286 (IAWC…VTLL).

The protein belongs to the UbiA prenyltransferase family. Protoheme IX farnesyltransferase subfamily.

The protein localises to the cell inner membrane. It catalyses the reaction heme b + (2E,6E)-farnesyl diphosphate + H2O = Fe(II)-heme o + diphosphate. It participates in porphyrin-containing compound metabolism; heme O biosynthesis; heme O from protoheme: step 1/1. Converts heme B (protoheme IX) to heme O by substitution of the vinyl group on carbon 2 of heme B porphyrin ring with a hydroxyethyl farnesyl side group. The chain is Protoheme IX farnesyltransferase from Ruthia magnifica subsp. Calyptogena magnifica.